The sequence spans 404 residues: Glucose-1-phosphate adenylyltransferase 2 (404 aa).

Residues Y97, G162, 177–178 (EK), and S195 each bind alpha-D-glucose 1-phosphate.

It belongs to the bacterial/plant glucose-1-phosphate adenylyltransferase family. In terms of assembly, homotetramer.

The enzyme catalyses alpha-D-glucose 1-phosphate + ATP + H(+) = ADP-alpha-D-glucose + diphosphate. It functions in the pathway glycan biosynthesis; glycogen biosynthesis. Functionally, involved in the biosynthesis of ADP-glucose, a building block required for the elongation reactions to produce glycogen. Catalyzes the reaction between ATP and alpha-D-glucose 1-phosphate (G1P) to produce pyrophosphate and ADP-Glc. This is Glucose-1-phosphate adenylyltransferase 2 from Vibrio parahaemolyticus serotype O3:K6 (strain RIMD 2210633).